Consider the following 360-residue polypeptide: Protein Wnt-2 (360 aa).

The signal sequence occupies residues 1–25 (MNAPLGGIWLWLPLLLTWLTPEVNS). Intrachain disulfides connect C76–C87, C127–C135, C137–C157, C206–C220, C208–C215, C278–C309, C294–C304, C308–C348, C324–C339, C326–C336, and C331–C332. A lipid anchor (O-palmitoleoyl serine; by PORCN) is attached at S212. An N-linked (GlcNAc...) asparagine glycan is attached at N295.

It belongs to the Wnt family. Post-translationally, palmitoleoylation is required for efficient binding to frizzled receptors. Depalmitoleoylation leads to Wnt signaling pathway inhibition. In terms of tissue distribution, expressed in brain in the thalamus, in fetal and adult lung and in placenta.

Its subcellular location is the secreted. It is found in the extracellular space. The protein resides in the extracellular matrix. In terms of biological role, ligand for members of the frizzled family of seven transmembrane receptors. Functions in the canonical Wnt signaling pathway that results in activation of transcription factors of the TCF/LEF family. Functions as a upstream regulator of FGF10 expression. Plays an important role in embryonic lung development. May contribute to embryonic brain development by regulating the proliferation of dopaminergic precursors and neurons. The protein is Protein Wnt-2 (WNT2) of Homo sapiens (Human).